We begin with the raw amino-acid sequence, 199 residues long: MEKRELKTFVPKFDKIPWLSEASVVNKPLILSIPRRYRSSIVLTSYKKDMYLPHLLEDSDFISKARKNEHENLLPRNKQLCSTCRGYQEMKTLQPKIFKIPDHREPSPQNSVNHGEVSLHSQEQQLHACNDIPTESIRYRLPILGPRTAVFHRLLSDAYKTPQDTQYCAFPKKKGMSKTVKQITTPHAALYPCRSYSAI.

This is an uncharacterized protein from Rattus norvegicus (Rat).